We begin with the raw amino-acid sequence, 354 residues long: Tsukushi (354 aa).

A signal peptide spans 1–17; that stretch reads MLCSLFLLLLAVGRVQT. Residues 18–59 form the LRRNT domain; the sequence is TRPCFPGCQCEEETFGLFDSFSLIRVDCSSLGPHIVPVPIPL. LRR repeat units follow at residues 60 to 81, 86 to 107, 110 to 131, 133 to 154, 160 to 180, 186 to 207, 208 to 228, 231 to 253, 256 to 277, and 281 to 302; these read DTAH…VLAG, TLAG…AFSR, YLES…IFTS, PLSD…AFTT, ALHV…PARA, TIQS…RDLP, LRYL…AFMG, GLTH…GFRE, GLQV…EVFS, and LLQE…LLHH. Asn-75 carries an N-linked (GlcNAc...) asparagine glycan. The N-linked (GlcNAc...) asparagine glycan is linked to Asn-138. N-linked (GlcNAc...) asparagine glycosylation is present at Asn-191.

Interacts with FZD4 (via FZ domain); competes with WNT2B for binding to FZD4, inhibiting Wnt signaling and repressing peripheral eye development. Interacts with TGFB1; the interaction contributes to regulation of the hair cycle. Interacts with netrin. Interacts with CCN2. As to expression, expressed in macrophages in inflamed wounds with wound expression starting 2 days post-wounding (dpw) (at protein level). At 7 dpw, expressed from epidermis and extracellular matrix in the wound edge to neoepidermis and granulation tissue and in panniculus carnosus under the granulation tissue (at protein level). After fibrosis, disappears in the dermal area at 11 dpw (at protein level). Expressed in the hair follicle during morphogenesis and the hair cycle (at protein level). In embryonic brain, strong expression in the olfactory bulb, anterior olfactory nucleus, neocortex, piriform cortex, glial wedge, midline zipper glia, indusium griseum and the area surrounding the anterior commissure (AC) but not on AC axons (at protein level). In the adult eye, expressed in retinal layers, lens epithelium, and ciliary body where it is expressed predominantly in the inner non-pigmented layer. Expressed in almost all brain regions in the embryo, in the cortex and the lateral ventricle at P0 and is restricted to the subventricular zone and lateral nucleus of the amygdala in adults. Prominent expression in hippocampal regions from early postnatal stages until postnatal day 15 and gradually declines at later stages. Expressed in almost all bone regions in the femurs of juveniles. In the inner ear, accumulates in nonprosensory regions during early embryonic stages and in both nonprosensory and prosensory regions in late embryonic stages. In the adult ear, expressed in the organ of Corti, spiral ganglion cells, and the stria vascularis. Highly expressed in the liver where it is detected primarily in hepatocytes but not in non-parenchymal cells.

The protein localises to the secreted. In terms of biological role, contributes to various developmental events and other processes such as wound healing and cholesterol homeostasis through its interactions with multiple signaling pathways. Wnt signaling inhibitor which competes with WNT2B for binding to Wnt receptor FZD4 and represses WNT2B-dependent development of the peripheral eye. Plays a role in regulating the hair cycle by controlling TGFB1 signaling. Required for the development of the anterior commissure in the brain by inhibiting neurite outgrowth. Essential for terminal differentiation of hippocampal neural stem cells. Plays a role in regulating bone elongation and bone mass by modulating growth plate chondrocyte function and overall body size. Required for development of the inner ear through its involvement in stereocilia formation in inner hair cells. Facilitates wound healing by inhibiting secretion of TGFB1 from macrophages which prevents myofibroblast differentiation, maintaining inflammatory cell quiescence. Plays a role in cholesterol homeostasis by reducing circulating high-density lipoprotein cholesterol, lowering cholesterol efflux capacity and decreasing cholesterol-to-bile acid conversion in the liver. In one study, shown to negatively regulate sympathetic innervation in brown fat, leading to reduced energy expenditure. In another study, shown not to affect brown fat thermogenic capacity, body weight gain or glucose homeostasis. The sequence is that of Tsukushi from Mus musculus (Mouse).